Consider the following 410-residue polypeptide: Putative competence-damage inducible protein (410 aa).

It belongs to the CinA family.

The chain is Putative competence-damage inducible protein from Clostridium beijerinckii (strain ATCC 51743 / NCIMB 8052) (Clostridium acetobutylicum).